The chain runs to 217 residues: Photosynthetic NDH subunit of lumenal location 4, chloroplastic (217 aa).

A chloroplast-targeting transit peptide spans 1–34; the sequence is MAISTLTLTQSLYTRSFRPTIFFSSSSSSSFSCL. 2 disulfide bridges follow: Cys-87/Cys-99 and Cys-188/Cys-193. A PPIase FKBP-type domain is found at 112-211; sequence GVLVNIHYTA…LYDINFVEIY (100 aa).

This sequence belongs to the FKBP-type PPIase family. In terms of assembly, part of the chloroplast NDH complex, composed of a mixture of chloroplast and nucleus encoded subunits. Component of the NDH lumenal subcomplex, at least composed of PnsL1, PnsL2, PnsL3, PnsL4 and PnsL5.

The protein resides in the plastid. The protein localises to the chloroplast thylakoid lumen. The catalysed reaction is [protein]-peptidylproline (omega=180) = [protein]-peptidylproline (omega=0). Functionally, NDH shuttles electrons from NAD(P)H:plastoquinone, via FMN and iron-sulfur (Fe-S) centers, to quinones in the photosynthetic chain and possibly in a chloroplast respiratory chain. The immediate electron acceptor for the enzyme in this species is believed to be plastoquinone. Couples the redox reaction to proton translocation, and thus conserves the redox energy in a proton gradient. PPIases accelerate the folding of proteins. It catalyzes the cis-trans isomerization of proline imidic peptide bonds in oligopeptides. Seems to be essential for stabilizing the NDH subcomplex A. This is Photosynthetic NDH subunit of lumenal location 4, chloroplastic from Arabidopsis thaliana (Mouse-ear cress).